A 195-amino-acid chain; its full sequence is Pyruvoyl-dependent arginine decarboxylase AaxB (195 aa).

At Ser-53 the chain carries Pyruvic acid (Ser).

It belongs to the pyruvoyl-dependent arginine decarboxylase family. Trimer of an alpha-beta dimer. Requires pyruvate as cofactor.

The protein resides in the cytoplasm. It carries out the reaction L-arginine + H(+) = agmatine + CO2. Inhibited by argininamide. Its function is as follows. Part of the AaxABC system, catalyzes the decarboxylation of L-arginine. The arginine uptake by the bacterium in the macrophage may be a virulence factor against the host innate immune response. In Chlamydia pneumoniae (Chlamydophila pneumoniae), this protein is Pyruvoyl-dependent arginine decarboxylase AaxB (aaxB).